The chain runs to 675 residues: MFKKLFGQLQRIGKALMLPVAILPAAGLLLAIGTAFQGEALQQYLPFIKNGVIQNIANMMTGAGGIIFDNLPIIFALGVAIGLAGGDGVAAIAAFVGFIIMNKTMGAFLNVTPAQLEDPSKGFANVLGIPTLQTGVFGGIIIGALAAWCYNKFYNISLPSYLGFFAGKRFVPIMMATTSFILAFPMAWIWPFIQNGLNAFSTGLLDSNTGLAVFLFGFIKRLLIPFGLHHIFHAPFWFEFGSWKNAAGEIIRGDQRIFIEQIREGVHLTSGKFMQGEFPVMMFGLPAAALAIYQTAKPENKKVVGGLMLSAALTSFLTGITEPLEFSFLFVAPLLFFIHAVLDGLSFLTLYLLNLHLGYTFSGGFIDFVLLGILPNKTPWWLVIPVGLVYAVIYYVVFRFLIVKFNFKTPGREDKQASVANTSASKLPFDVLDAMGGKENIKHLDACITRLRVEVNDKSKVDVEGLKALGASGVLEVGNNMQAIFGPKSDQIKHDMARIMNGDITKPSETTVTEDTSDEPVQLEEVKETDIYAPGTGHIIPLSEVPDKVFSEKMMGDGIGFVPEKGGIVAPFDGTVKTIFPTKHAIGLESDTGIEVLIHIGIDTVKLNGEGFESLVDVNEPVTQGQPLMKINLAYLKEHAPSVVTPVIITNQGDKTLTFDDVDSVDPGKRIMTIK.

The 412-residue stretch at 3-414 folds into the PTS EIIC type-1 domain; that stretch reads KKLFGQLQRI…FNFKTPGRED (412 aa). A run of 11 helical transmembrane segments spans residues 16 to 36, 59 to 79, 81 to 101, 126 to 146, 173 to 193, 199 to 219, 273 to 293, 303 to 323, 328 to 348, 355 to 375, and 378 to 398; these read LMLP…GTAF, MMTG…ALGV, IGLA…FIIM, VLGI…GALA, IMMA…WPFI, AFST…FGFI, FMQG…LAIY, VVGG…ITEP, FLFV…LSFL, LHLG…GILP, and TPWW…YVVF. Residues 425 to 506 enclose the PTS EIIB type-1 domain; it reads SKLPFDVLDA…ARIMNGDITK (82 aa). Cys447 acts as the Phosphocysteine intermediate; for EIIB activity in catalysis. The PTS EIIA type-1 domain maps to 547 to 651; that stretch reads DKVFSEKMMG…SVVTPVIITN (105 aa). His599 functions as the Tele-phosphohistidine intermediate; for EIIA activity in the catalytic mechanism.

Its subcellular location is the cell membrane. It catalyses the reaction N(pros)-phospho-L-histidyl-[protein] + D-glucose(out) = D-glucose 6-phosphate(in) + L-histidyl-[protein]. In terms of biological role, the phosphoenolpyruvate-dependent sugar phosphotransferase system (sugar PTS), a major carbohydrate active transport system, catalyzes the phosphorylation of incoming sugar substrates concomitantly with their translocation across the cell membrane. This system is involved in glucose transport. In Staphylococcus haemolyticus (strain JCSC1435), this protein is PTS system glucose-specific EIICBA component (ptsG).